We begin with the raw amino-acid sequence, 635 residues long: Leucine-rich repeat and fibronectin type-III domain-containing protein 4 (635 aa).

Residues 1–16 (MAPPLLLLLLASGAAA) form the signal peptide. The region spanning 17–48 (CPLPCVCQNLSESLSTLCAHRGLLFVPPNVDR) is the LRRNT domain. Residues 17 to 518 (CPLPCVCQNL…LQAHVLGGTL (502 aa)) are Extracellular-facing. N-linked (GlcNAc...) asparagine glycosylation is found at N25 and N70. 7 LRR repeats span residues 49–70 (RTVE…DFRN), 73–94 (GLVD…AFGD), 97–118 (SLRS…SLRG), 121–142 (NLQH…AFDD), 146–161 (SLED…RQVP), 170–191 (ALHT…AFAQ), and 194–215 (QLSR…PLFS). One can recognise an LRRCT domain in the interval 234–280 (NPLHCNCELLWLRRLARPDDLETCASPPGLAGRYFWAVPEGEFSCEP). The Ig-like domain occupies 281–367 (PLIARHTQRL…GEATARVELR (87 aa)). A disulfide bridge connects residues C302 and C351. N324, N333, N376, and N440 each carry an N-linked (GlcNAc...) asparagine glycan. The disordered stretch occupies residues 373 to 410 (HGGNSSAEGGRPGPSDIAASARTAAEGEGTLESEPAVQ). The Fibronectin type-III domain occupies 405–502 (SEPAVQVTEV…GCAHFSTLPA (98 aa)). Residues 519–539 (TVAVGGVLVAALLVFTVALLV) traverse the membrane as a helical segment. The Cytoplasmic portion of the chain corresponds to 540–635 (RGRGAGNGRL…SAERLEESVV (96 aa)). Positions 555-583 (HVQSQTNGGPSPTPKAHPPRSPPPRPQRS) are disordered. The segment covering 565–580 (SPTPKAHPPRSPPPRP) has biased composition (pro residues). 2 positions are modified to phosphoserine: S585 and S626. The PDZ-binding signature appears at 632–635 (ESVV).

It belongs to the LRFN family. As to quaternary structure, can form heteromeric complexes with LRFN1, LRFN2, LRFN3 and LRFN5. Unable to form homophilic interactions across cell junctions. Interacts with DLG1, DLG2, DLG3 and DLG4. In terms of processing, glycosylated.

It is found in the membrane. Promotes neurite outgrowth in hippocampal neurons. May play a role in redistributing DLG4 to the cell periphery. This Homo sapiens (Human) protein is Leucine-rich repeat and fibronectin type-III domain-containing protein 4 (LRFN4).